Consider the following 96-residue polypeptide: Secreted RxLR effector protein 123 (96 aa).

Positions 1 to 22 (MVGAYYVGIALLVAGGSQTAAG) are cleaved as a signal peptide. Residues 49–70 (RFLRKSRNPKDNLMLSEANEER) carry the RxLR-dEER motif. The disordered stretch occupies residues 57-96 (PKDNLMLSEANEERTPSSPSNSLTEFIVSEPITTNVMRTE). A compositionally biased stretch (polar residues) spans 87-96 (PITTNVMRTE).

It belongs to the RxLR effector family.

It is found in the secreted. Its subcellular location is the host nucleus. The protein localises to the host cytoplasm. Its function is as follows. Secreted effector that dos not suppress the host cell death induced by cell death-inducing proteins. This chain is Secreted RxLR effector protein 123, found in Plasmopara viticola (Downy mildew of grapevine).